The following is an 80-amino-acid chain: Trefoil factor 3 (80 aa).

Residues 1–21 form the signal peptide; it reads MEARVLWLLALVLALGSSSLA. The P-type domain maps to 30 to 73; that stretch reads NLCAVPAKNRVDCGYPEISPEQCVNRGCCFDSSIPEVPWCFKPL. 3 cysteine pairs are disulfide-bonded: C32-C58, C42-C57, and C52-C69.

Monomer. Homodimer; disulfide-linked.

It is found in the secreted. The protein resides in the extracellular space. The protein localises to the extracellular matrix. Its subcellular location is the cytoplasm. Involved in the maintenance and repair of the intestinal mucosa. Promotes the mobility of epithelial cells in healing processes (motogen). The protein is Trefoil factor 3 (TFF3) of Felis catus (Cat).